A 64-amino-acid chain; its full sequence is Phylloxin-B1 (64 aa).

Positions 1–22 (MVFLKKSLLLVLFVGLVSLSIC) are cleaved as a signal peptide. The propeptide occupies 23-42 (EENKREEHEEIEENKEKAEE). Position 63 is a glutamine amide (Q63).

Expressed by the skin glands.

The protein resides in the secreted. Antimicrobial peptide against the wall-less bacteria A.laidlawii and S.melliferum, the Gram-positive bacteria B.megaterium KM, C.glutamicum ATCC 27853 and M.luteus ATCC 27853 and the Gram-negative-bacteria R.meliloti 102F34 and E.coli K12. This chain is Phylloxin-B1, found in Phyllomedusa bicolor (Two-colored leaf frog).